The chain runs to 514 residues: 2-isopropylmalate synthase (514 aa).

Positions 5-268 (LIIFDTTLRD…DVGLDTTQIV (264 aa)) constitute a Pyruvate carboxyltransferase domain. Mn(2+) is bound by residues Asp14, His202, His204, and Asn239. The tract at residues 395–514 (KFVSLSQRSE…KDDKLNPQRS (120 aa)) is regulatory domain.

It belongs to the alpha-IPM synthase/homocitrate synthase family. LeuA type 1 subfamily. In terms of assembly, homodimer. It depends on Mn(2+) as a cofactor.

The protein resides in the cytoplasm. It catalyses the reaction 3-methyl-2-oxobutanoate + acetyl-CoA + H2O = (2S)-2-isopropylmalate + CoA + H(+). Its pathway is amino-acid biosynthesis; L-leucine biosynthesis; L-leucine from 3-methyl-2-oxobutanoate: step 1/4. Catalyzes the condensation of the acetyl group of acetyl-CoA with 3-methyl-2-oxobutanoate (2-ketoisovalerate) to form 3-carboxy-3-hydroxy-4-methylpentanoate (2-isopropylmalate). In Burkholderia ambifaria (strain ATCC BAA-244 / DSM 16087 / CCUG 44356 / LMG 19182 / AMMD) (Burkholderia cepacia (strain AMMD)), this protein is 2-isopropylmalate synthase.